The chain runs to 65 residues: Metallothionein-like protein 3B (65 aa).

This sequence belongs to the metallothionein superfamily. Type 15 family.

Functionally, metallothioneins have a high content of cysteine residues that bind various heavy metals. This Oryza sativa subsp. indica (Rice) protein is Metallothionein-like protein 3B (MT3B).